Reading from the N-terminus, the 313-residue chain is N-acetyl-gamma-glutamyl-phosphate reductase (313 aa).

Residue Cys-117 is part of the active site.

This sequence belongs to the NAGSA dehydrogenase family. Type 2 subfamily.

It is found in the cytoplasm. The enzyme catalyses N-acetyl-L-glutamate 5-semialdehyde + phosphate + NADP(+) = N-acetyl-L-glutamyl 5-phosphate + NADPH + H(+). It functions in the pathway amino-acid biosynthesis; L-arginine biosynthesis; N(2)-acetyl-L-ornithine from L-glutamate: step 3/4. In terms of biological role, catalyzes the NADPH-dependent reduction of N-acetyl-5-glutamyl phosphate to yield N-acetyl-L-glutamate 5-semialdehyde. The polypeptide is N-acetyl-gamma-glutamyl-phosphate reductase (Burkholderia cenocepacia (strain HI2424)).